The primary structure comprises 226 residues: ATP synthase F(0) complex subunit a (226 aa).

6 consecutive transmembrane segments (helical) span residues 12-32, 68-88, 97-117, 138-158, 164-184, and 189-209; these read PTMM…ILFP, WALM…LGLL, QLSM…ITGF, IPML…ALAV, ITAG…LMDI, and AFIT…VALI.

The protein belongs to the ATPase A chain family. Component of the ATP synthase complex composed at least of ATP5F1A/subunit alpha, ATP5F1B/subunit beta, ATP5MC1/subunit c (homooctomer), MT-ATP6/subunit a, MT-ATP8/subunit 8, ATP5ME/subunit e, ATP5MF/subunit f, ATP5MG/subunit g, ATP5MK/subunit k, ATP5MJ/subunit j, ATP5F1C/subunit gamma, ATP5F1D/subunit delta, ATP5F1E/subunit epsilon, ATP5PF/subunit F6, ATP5PB/subunit b, ATP5PD/subunit d, ATP5PO/subunit OSCP. ATP synthase complex consists of a soluble F(1) head domain (subunits alpha(3) and beta(3)) - the catalytic core - and a membrane F(0) domain - the membrane proton channel (subunits c, a, 8, e, f, g, k and j). These two domains are linked by a central stalk (subunits gamma, delta, and epsilon) rotating inside the F1 region and a stationary peripheral stalk (subunits F6, b, d, and OSCP). Interacts with DNAJC30; interaction is direct.

The protein localises to the mitochondrion inner membrane. It carries out the reaction H(+)(in) = H(+)(out). Its function is as follows. Subunit a, of the mitochondrial membrane ATP synthase complex (F(1)F(0) ATP synthase or Complex V) that produces ATP from ADP in the presence of a proton gradient across the membrane which is generated by electron transport complexes of the respiratory chain. ATP synthase complex consist of a soluble F(1) head domain - the catalytic core - and a membrane F(1) domain - the membrane proton channel. These two domains are linked by a central stalk rotating inside the F(1) region and a stationary peripheral stalk. During catalysis, ATP synthesis in the catalytic domain of F(1) is coupled via a rotary mechanism of the central stalk subunits to proton translocation. With the subunit c (ATP5MC1), forms the proton-conducting channel in the F(0) domain, that contains two crucial half-channels (inlet and outlet) that facilitate proton movement from the mitochondrial intermembrane space (IMS) into the matrix. Protons are taken up via the inlet half-channel and released through the outlet half-channel, following a Grotthuss mechanism. This chain is ATP synthase F(0) complex subunit a, found in Halichoerus grypus (Gray seal).